A 221-amino-acid polypeptide reads, in one-letter code: Deoxyribose-phosphate aldolase (221 aa).

The active-site Proton donor/acceptor is the Asp91. The active-site Schiff-base intermediate with acetaldehyde is the Lys153. Catalysis depends on Lys182, which acts as the Proton donor/acceptor.

It belongs to the DeoC/FbaB aldolase family. DeoC type 1 subfamily.

It is found in the cytoplasm. It carries out the reaction 2-deoxy-D-ribose 5-phosphate = D-glyceraldehyde 3-phosphate + acetaldehyde. It participates in carbohydrate degradation; 2-deoxy-D-ribose 1-phosphate degradation; D-glyceraldehyde 3-phosphate and acetaldehyde from 2-deoxy-alpha-D-ribose 1-phosphate: step 2/2. Functionally, catalyzes a reversible aldol reaction between acetaldehyde and D-glyceraldehyde 3-phosphate to generate 2-deoxy-D-ribose 5-phosphate. The sequence is that of Deoxyribose-phosphate aldolase from Clostridium botulinum (strain Alaska E43 / Type E3).